Here is a 56-residue protein sequence, read N- to C-terminus: Large ribosomal subunit protein bL33 (56 aa).

Positions 1–12 are enriched in basic and acidic residues; that stretch reads MATKGGREKIKL. Positions 1–28 are disordered; it reads MATKGGREKIKLESTAGTGHFYTTSKNK. The span at 15–25 shows a compositional bias: polar residues; the sequence is TAGTGHFYTTS.

It belongs to the bacterial ribosomal protein bL33 family.

The sequence is that of Large ribosomal subunit protein bL33 from Albidiferax ferrireducens (strain ATCC BAA-621 / DSM 15236 / T118) (Rhodoferax ferrireducens).